A 200-amino-acid chain; its full sequence is Protein C2-DOMAIN ABA-RELATED 5 (200 aa).

Residues 22 to 142 (VAGEKHKDRR…LKMHLHDLPS (121 aa)) form the C2 domain. Residues R57, D58, D63, D109, Y110, D111, and D117 each contribute to the Ca(2+) site.

It belongs to the plant CAR protein family. As to quaternary structure, binds to PYR/PYL/RCAR abscisic acid intracellular receptors in an ABA-independent manner, both at the plasma membrane and in the nucleus.

It localises to the cell membrane. The protein localises to the nucleus. Stimulates the GTPase/ATPase activities of Obg-like ATPases. Mediates the transient calcium-dependent interaction of PYR/PYL/RCAR abscisic acid (ABA) receptors with the plasma membrane and thus regulates ABA sensitivity. The chain is Protein C2-DOMAIN ABA-RELATED 5 from Arabidopsis thaliana (Mouse-ear cress).